The following is a 1295-amino-acid chain: Protein glp-1 (1295 aa).

Residues 1-15 (MRVLLILLAFFAPIA) form the signal peptide. At 16-764 (SQLMGGECGR…NEIDEGWSRS (749 aa)) the chain is on the extracellular side. EGF-like domains follow at residues 19–58 (MGGECGREGACSVNGKCYNGKLIETYWCRCKKGFGGAFCE), 117–152 (GVNPCDSDPCNNGLCYPFYGGFQCICNNGYGGSYCE), 154–190 (GIDHCAQNECAEGSTCVNSVYNYYCDCPIGKSGRYCE), and 190–230 (ERTE…EFCN). Intrachain disulfides connect Cys23-Cys35, Cys29-Cys46, Cys48-Cys57, Cys121-Cys131, Cys126-Cys140, Cys142-Cys151, Cys158-Cys169, Cys163-Cys178, Cys180-Cys189, Cys201-Cys206, Cys220-Cys229, Cys236-Cys248, Cys242-Cys257, Cys259-Cys268, Cys275-Cys286, Cys280-Cys296, Cys298-Cys307, Cys329-Cys342, Cys336-Cys347, Cys349-Cys358, Cys373-Cys384, Cys378-Cys394, Cys396-Cys405, Cys411-Cys422, Cys416-Cys431, Cys433-Cys442, Cys450-Cys461, Cys455-Cys467, Cys469-Cys478, Cys496-Cys519, Cys501-Cys514, Cys510-Cys526, Cys536-Cys560, Cys542-Cys555, Cys551-Cys567, Cys582-Cys595, and Cys591-Cys607. An EGF-like 5; calcium-binding domain is found at 232–269 (DKNECLIEETCVNNSTCFNLHGDFTCTCKPGYAGKYCE). Asn244 and Asn245 each carry an N-linked (GlcNAc...) asparagine glycan. EGF-like domains lie at 271–308 (AIDMCKDYVCQNDGYCAHDSNQMPICYCEQGFTGQRCE), 316–359 (GGIH…DRCE), 369–406 (DIQSCKYNPCVNNATCIDLKNSGYSCHCPLGFYGLNCE), 407–443 (QHLLCTPTTCANGGTCEGVNGVIRCNCPNGFSGDYCE), and 446–479 (DRQLCSRHPCKNGGVCKNTGYCECQYGYTGPTCE). A glycan (N-linked (GlcNAc...) asparagine) is linked at Asn333. The N-linked (GlcNAc...) asparagine glycan is linked to Asn381. LNR repeat units follow at residues 496–532 (CEQRKCMDLASNGICNPECNLEECNFDGGDCSGGQRP), 536–577 (CQYP…CPAH), and 581–612 (HCIERRGDGVCNLECSFIGCGFDGGDCNNGTE). Asn609 and Asn675 each carry an N-linked (GlcNAc...) asparagine glycan. Residues 765–786 (QVILFACIAFLAFGTVVAGVIA) traverse the membrane as a helical segment. Residues 787–1295 (KNGPERSRKR…AEQMNGSFYC (509 aa)) are Cytoplasmic-facing. 5 ANK repeats span residues 961-990 (DENTALMLAVRAHRVRLSVVLLREGANPTI), 994-1023 (SERSALHEAVVNKDLRILRHLLTDKRLLKE), 1030-1062 (NGMTALMLVARELGKHQVEMAELLLSKGAKLDY), 1074-1103 (KGRTALHYAAMHDNEEMVIMLVRRSSNKDK), and 1107-1136 (DGRTPIMLAAKEGCEKTVQYLALNDASLGI). Residues 1177 to 1244 (IVKSGHGAKS…TTSTPNRMET (68 aa)) form a disordered region. Residues 1201-1210 (KTPTSAASSR) show a composition bias toward polar residues. Positions 1221–1239 (DGSFSSPSPHYYPTTTSTP) are enriched in low complexity.

In terms of assembly, interacts with sel-10. As to quaternary structure, when activated, the glp-1/Notch intracellular domain (NICD) may become a component of a complex consisting of at least the NICD, lag-1 and lag-3. Post-translationally, upon binding its ligands, it is cleaved (S2 cleavage) in its extracellular domain, close to the transmembrane domain. S2 cleavage is probably mediated by the metalloproteases adm-4 and sup-17. It is then cleaved (S3 cleavage) downstream of its transmembrane domain, releasing it from the cell membrane; S3 cleavage requires a multiprotein gamma-secretase complex, which may include presenilin sel-12. As to expression, expressed in the distal mitotic region of the germ line. May be absent from the gonadal distal tip cell (DTC).

The protein localises to the cell membrane. It localises to the cell projection. It is found in the axon. The protein resides in the nucleus. Its function is as follows. Essential signaling protein which has a major role in germline and embryonic development; involved in cell fate decisions that require cell-cell interactions. Probable membrane-bound receptor for putative ligands lag-2 and apx-1. Upon ligand activation, and releasing from the cell membrane, the glp-1/Notch intracellular domain (NICD) probably forms a transcriptional activator complex with lag-1 and lag-3 and regulates expression of various genes; targets in the germline include lst-1 and sygl-1. Involved in the specification of the cell fates of the blastomeres, ABa and ABp. Proper signaling by glp-1 induces ABa descendants to produce anterior pharyngeal cells, and ABp descendants to adopt a different fate. Contributes to the establishment of the dorsal-ventral axis in early embryos. Required in postmitotic neurons in order to maintain the developmentally arrested larval state known as dauer, probably in response to lag-2. Regulates germ cell mitotic proliferation probably by regulating MAP kinase phosphatase lip-1 expression. Required for oocyte growth control. Plays a negative role in lifespan. This chain is Protein glp-1, found in Caenorhabditis elegans.